Here is a 991-residue protein sequence, read N- to C-terminus: Transcription factor ROB1 (991 aa).

The zn(2)-C6 fungal-type DNA-binding region spans cysteine 17–cysteine 43. Disordered stretches follow at residues leucine 150–alanine 188, phenylalanine 792–proline 875, and glutamine 901–proline 959. The span at glutamine 152–serine 168 shows a compositional bias: low complexity. Polar residues predominate over residues alanine 169–leucine 187. Residues glutamine 795 to glutamine 806 show a composition bias toward low complexity. 2 stretches are compositionally biased toward basic and acidic residues: residues proline 807–glutamate 817 and glutamine 825–lysine 855. A compositionally biased stretch (low complexity) spans glutamine 907–glutamine 931.

The protein resides in the nucleus. Transcription factor that mediates conventional biofilm formation and plays a key role in microcolony formation under both flow and static conditions and to epithelial surfaces. Modulates infection of mammalian hosts. The protein is Transcription factor ROB1 of Candida albicans (strain SC5314 / ATCC MYA-2876) (Yeast).